The chain runs to 331 residues: Type 2 lactosamine alpha-2,3-sialyltransferase (331 aa).

The Cytoplasmic segment spans residues 1 to 4 (MKGY). Residues 5–25 (VVAIFLSSIFLYYVLYCILWG) traverse the membrane as a helical; Signal-anchor for type II membrane protein segment. Over 26–331 (TNGYWFPNEE…KKMVINLTQN (306 aa)) the chain is Lumenal. N-linked (GlcNAc...) asparagine glycosylation is found at N129, N181, N295, N308, and N327.

This sequence belongs to the glycosyltransferase 29 family.

The protein localises to the golgi apparatus membrane. The catalysed reaction is a neolactoside nLc4Cer(d18:1(4E)) + CMP-N-acetyl-beta-neuraminate = a neolactoside IV(3)-alpha-NeuAc-nLc4Cer(d18:1(4E)) + CMP + H(+). The enzyme catalyses a beta-D-galactosyl-(1-&gt;4)-N-acetyl-beta-D-glucosaminyl derivative + CMP-N-acetyl-beta-neuraminate = an N-acetyl-alpha-neuraminyl-(2-&gt;3)-beta-D-galactosyl-(1-&gt;4)-N-acetyl-beta-D-glucosaminyl derivative + CMP + H(+). It catalyses the reaction a neolactoside nLc6Cer(d18:1(4E)) + CMP-N-acetyl-beta-neuraminate = a neolactoside VI(3)-alpha-NeuNAc-nLc6Cer(d18:1(4E)) + CMP + H(+). Functionally, transfers the sialyl residue from CMP-N-acetyl-beta-neuraminate to the terminal galactose residue on sugar chains of glycoproteins and glycolipids. It's alpha-2,3-sialyltransferase activity is specific toward type II glycan chains (Galbeta1-4GlcNAc) on glycoproteins and glycolipids such as neolactosides nLc4Cer and nLc6Cer, whose sialyl-products serve as precursors for the Lewis X antigen. Critically involved in the synthesis of functional selectin ligands needed for neutrophil recruitment during inflammation and lymphocyte homing to the lymph nodes. The sequence is that of Type 2 lactosamine alpha-2,3-sialyltransferase (St3gal6) from Rattus norvegicus (Rat).